The sequence spans 258 residues: 6-carboxyhexanoate--CoA ligase (258 aa).

The protein belongs to the BioW family. Homodimer. It depends on Mg(2+) as a cofactor.

It carries out the reaction heptanedioate + ATP + CoA = 6-carboxyhexanoyl-CoA + AMP + diphosphate. The protein operates within metabolic intermediate metabolism; pimeloyl-CoA biosynthesis; pimeloyl-CoA from pimelate: step 1/1. Catalyzes the transformation of pimelate into pimeloyl-CoA with concomitant hydrolysis of ATP to AMP. In Bacillus subtilis (strain BSn5), this protein is 6-carboxyhexanoate--CoA ligase.